The following is a 713-amino-acid chain: Oligopeptidase PhomG (713 aa).

His461 provides a ligand contact to Zn(2+). Glu462 is an active-site residue. 2 residues coordinate Zn(2+): His465 and His468.

It belongs to the peptidase M3 family. As to quaternary structure, monomer. The cofactor is Zn(2+).

The protein operates within mycotoxin biosynthesis. Functionally, oligopeptidase; part of the gene cluster that mediates the biosynthesis of the phomopsins, a group of hexapeptide mycotoxins which infects lupins and causes lupinosis disease in livestock. Within the pathway, phomG and phomG' are probably involved in the processing of the phomA and phomA' precursors. The pathway starts with the processing of the precursor phomA by several endopeptidases including kexin proteases as well as the cluster-specific S41 family peptidase phomP1 and the oligopeptidase phomG to produce 10 identical copies of the hexapeptide Tyr-Val-Ile-Pro-Ile-Asp. After being excised from the precursor peptide, the core peptides are cyclized and modified post-translationally by enzymes encoded within the gene cluster. The timing and order of proteolysis of the phomA precursor and PTMs are still unknown. Two tyrosinase-like enzymes, phomQ1 and phomQ2, catalyze the chlorination and hydroxylation of Tyr, respectively. PhomYb, is proposed to be involved in the construction of the macrocyclic structure. The other 4 ustYa family proteins may be involved in PTMs that generate the unique structure of phomopsin A. PhomYa is required for the hydroxylation of C-beta of Tyr. PhomYc, phomYd, and phomYe are responsible for the biosynthesis of 2,3-dehydroisoleucine (dIle), 2,3-dehydroaspartic acid (dAsp), and 3,4-dehydroproline (dPro), respectively. While dIle formation by phomYc is indispensable for the installation of dAsp by phomYd, the order of the other PTMs have not been elucidated yet. Most of the biosynthetic enzymes likely have broad substrate specificity, and thus, there might be a metabolic grid from a precursor to phomopsin A. The enzyme(s) responsible for the biosynthesis of 3,4-dehydrovaline (dVal) have also not been identified yet. Finally, phomM acts as an S-adenosylmethionine-dependent alpha-N-methyltransferase that catalyzes two successive N-methylation reactions, converting N-desmethyl-phomopsin A to phomopsin A and phomopsin A further to an N,N-dimethylated congener called phomopsin E. The protein is Oligopeptidase PhomG of Diaporthe leptostromiformis (Lupinosis disease fungus).